The following is a 508-amino-acid chain: NAD(P)H-quinone oxidoreductase subunit 2 B, chloroplastic (508 aa).

A run of 13 helical transmembrane segments spans residues 24–44 (LLLF…GLIL), 59–79 (WLYF…LFRW), 99–119 (IFQF…VEYI), 124–144 (MAIT…MFLC), 149–169 (FITI…LSGY), 184–204 (LLMG…LYGL), 227–247 (PGIS…LSPA), 295–315 (WHLL…LIAI), 323–343 (MLAY…IVGD), 354–374 (YMLF…LFGL), 395–415 (ALSL…AGFF), 418–438 (LYLF…IGLL), and 482–502 (MIVC…IIAI).

It belongs to the complex I subunit 2 family. NDH is composed of at least 16 different subunits, 5 of which are encoded in the nucleus.

It localises to the plastid. It is found in the chloroplast thylakoid membrane. The enzyme catalyses a plastoquinone + NADH + (n+1) H(+)(in) = a plastoquinol + NAD(+) + n H(+)(out). It catalyses the reaction a plastoquinone + NADPH + (n+1) H(+)(in) = a plastoquinol + NADP(+) + n H(+)(out). In terms of biological role, NDH shuttles electrons from NAD(P)H:plastoquinone, via FMN and iron-sulfur (Fe-S) centers, to quinones in the photosynthetic chain and possibly in a chloroplast respiratory chain. The immediate electron acceptor for the enzyme in this species is believed to be plastoquinone. Couples the redox reaction to proton translocation, and thus conserves the redox energy in a proton gradient. In Ipomoea purpurea (Common morning glory), this protein is NAD(P)H-quinone oxidoreductase subunit 2 B, chloroplastic.